A 549-amino-acid polypeptide reads, in one-letter code: Glucose-6-phosphate isomerase (549 aa).

The active-site Proton donor is E355. Active-site residues include H386 and K514.

It belongs to the GPI family.

The protein localises to the cytoplasm. The enzyme catalyses alpha-D-glucose 6-phosphate = beta-D-fructose 6-phosphate. It functions in the pathway carbohydrate biosynthesis; gluconeogenesis. It participates in carbohydrate degradation; glycolysis; D-glyceraldehyde 3-phosphate and glycerone phosphate from D-glucose: step 2/4. Its function is as follows. Catalyzes the reversible isomerization of glucose-6-phosphate to fructose-6-phosphate. The chain is Glucose-6-phosphate isomerase from Aeromonas salmonicida (strain A449).